The primary structure comprises 212 residues: ER lumen protein-retaining receptor 2 (212 aa).

The Lumenal segment spans residues 1-4; that stretch reads MNIF. The helical transmembrane segment at 5-24 threads the bilayer; that stretch reads RLTGDLSHLAAIVILLLKIW. The Cytoplasmic segment spans residues 25-32; that stretch reads KTRSCAGI. Residues 33 to 52 traverse the membrane as a helical segment; it reads SGKSQLLFALVFTTRYLDLF. The segment at 47-48 is interaction with the K-D-E-L motif on target proteins; the sequence is RY. Over 53-58 the chain is Lumenal; that stretch reads TSFISL. Residues 59-79 traverse the membrane as a helical segment; that stretch reads YNTSMKVIYLACSYATVYLIY. At 80–92 the chain is on the cytoplasmic side; that stretch reads LKFKATYDGNHDT. Residues 93–110 form a helical membrane-spanning segment; it reads FRVEFLVVPVGGLSFLVN. At 111–116 the chain is on the lumenal side; sequence HDFSPL. Residues 117-135 form a helical membrane-spanning segment; the sequence is EILWTFSIYLESVAILPQL. Over 136 to 149 the chain is Cytoplasmic; the sequence is FMISKTGEAETITT. The helical transmembrane segment at 150 to 168 threads the bilayer; that stretch reads HYLFFLGLYRALYLVNWIW. Residues 159 to 169 form an interaction with the K-D-E-L motif on target proteins region; the sequence is RALYLVNWIWR. The Lumenal segment spans residues 169-178; that stretch reads RFYFEGFFDL. Residues 179–199 form a helical membrane-spanning segment; it reads IAVVAGVVQTILYCDFFYLYI. At 200-212 the chain is on the cytoplasmic side; sequence TKVLKGKKLSLPA. An important for recycling of cargo proteins with the sequence motif K-D-E-L from the Golgi to the endoplasmic reticulum region spans residues 204-207; the sequence is KGKK.

Belongs to the ERD2 family.

It is found in the endoplasmic reticulum membrane. The protein resides in the golgi apparatus membrane. It localises to the cytoplasmic vesicle. Its subcellular location is the COPI-coated vesicle membrane. Membrane receptor that binds the K-D-E-L sequence motif in the C-terminal part of endoplasmic reticulum resident proteins and maintains their localization in that compartment by participating to their vesicle-mediated recycling back from the Golgi. Binding is pH dependent, and is optimal at pH 5-5.4. This Homo sapiens (Human) protein is ER lumen protein-retaining receptor 2 (KDELR2).